A 122-amino-acid polypeptide reads, in one-letter code: Large ribosomal subunit protein uL14 (122 aa).

It belongs to the universal ribosomal protein uL14 family. In terms of assembly, part of the 50S ribosomal subunit. Forms a cluster with proteins L3 and L19. In the 70S ribosome, L14 and L19 interact and together make contacts with the 16S rRNA in bridges B5 and B8.

Binds to 23S rRNA. Forms part of two intersubunit bridges in the 70S ribosome. The protein is Large ribosomal subunit protein uL14 of Cutibacterium acnes (strain DSM 16379 / KPA171202) (Propionibacterium acnes).